We begin with the raw amino-acid sequence, 164 residues long: N5-carboxyaminoimidazole ribonucleotide mutase (164 aa).

The substrate site is built by serine 13, aspartate 16, and arginine 43.

It belongs to the AIR carboxylase family. Class I subfamily.

The enzyme catalyses 5-carboxyamino-1-(5-phospho-D-ribosyl)imidazole + H(+) = 5-amino-1-(5-phospho-D-ribosyl)imidazole-4-carboxylate. It functions in the pathway purine metabolism; IMP biosynthesis via de novo pathway; 5-amino-1-(5-phospho-D-ribosyl)imidazole-4-carboxylate from 5-amino-1-(5-phospho-D-ribosyl)imidazole (N5-CAIR route): step 2/2. In terms of biological role, catalyzes the conversion of N5-carboxyaminoimidazole ribonucleotide (N5-CAIR) to 4-carboxy-5-aminoimidazole ribonucleotide (CAIR). The protein is N5-carboxyaminoimidazole ribonucleotide mutase of Haemophilus influenzae (strain ATCC 51907 / DSM 11121 / KW20 / Rd).